Here is a 588-residue protein sequence, read N- to C-terminus: Histone deacetylase 9 (588 aa).

S22 is modified (phosphoserine). The segment at 23 to 27 (PLDLR) is interaction with CTBP1. The span at 110-147 (RQEQEVERHRREQQLPPLRGKDRGRERAVASTEVKQKL) shows a compositional bias: basic and acidic residues. Disordered regions lie at residues 110–170 (RQEQ…HSVG), 183–242 (TSLD…SSPL), and 264–301 (SSVS…PHPE). The segment at 136-154 (RAVASTEVKQKLQEFLLSK) is interaction with MEF2. Polar residues-rich tracts occupy residues 154 to 166 (KSAT…NGKN) and 185 to 199 (LDQS…SPSY). Residues 175–343 (LWYTAAHHTS…LPAVPSPLNA (169 aa)) are interaction with MAPK10. The span at 208–219 (DSKDDFPLRKTA) shows a compositional bias: basic and acidic residues. The interval 218–261 (TASEPNLKVRSRLKQKVAERRSSPLLRRKDGNLVTSFKKRVFEV) is interaction with ETV6. S220 bears the Phosphoserine mark. Residues 233-242 (KVAERRSSPL) show a composition bias toward basic and acidic residues. Residue S240 is modified to Phosphoserine; by DYRK1B. Positions 264–284 (SSVSSSSPGSGPSSPNNGPAG) are enriched in low complexity. S450 carries the phosphoserine modification. A disordered region spans residues 493–533 (QLKQPGSHLEEAEEELQGDQSMEDRAASKDNSARSDSSACV). A compositionally biased stretch (basic and acidic residues) spans 514-525 (MEDRAASKDNSA). Residue S552 is modified to Phosphoserine.

This sequence belongs to the histone deacetylase family. HD type 2 subfamily. Homodimer. Interacts with ETV6. Interacts with MEF2, HDAC1, HDAC3, HDAC4, HDAC5, CTBP1 and MAPK10. The phosphorylated form interacts with 14-3-3. Interacts with FOXP3 in the absence of T-cell stimulation. Sumoylated. Post-translationally, phosphorylated on Ser-220 and Ser-450; which promotes 14-3-3-binding, impairs interaction with MEF2, and antagonizes antimyogenic activity. Phosphorylated on Ser-240 by DYRK1B; which impairs nuclear accumulation. Phosphorylated by the PKC kinases PKN1 and PKN2, impairing nuclear import. Expressed at high levels in heart, brain and spleen. Expressed in skeletal muscle.

It localises to the nucleus. The enzyme catalyses N(6)-acetyl-L-lysyl-[histone] + H2O = L-lysyl-[histone] + acetate. Devoided of intrinsic deacetylase activity, promotes the deacetylation of lysine residues on the N-terminal part of the core histones (H2A, H2B, H3 and H4) by recruiting HDAC1 and HDAC3. Histone deacetylation gives a tag for epigenetic repression and plays an important role in transcriptional regulation, cell cycle progression and developmental events. Represses MEF2-dependent transcription, inhibits skeletal myogenesis and may be involved in heart development. Protects neurons from apoptosis, both by inhibiting JUN phosphorylation by MAPK10 and by repressing JUN transcription via HDAC1 recruitment to JUN promoter. This is Histone deacetylase 9 (Hdac9) from Mus musculus (Mouse).